Consider the following 458-residue polypeptide: Hyaluronidase conohyal-P1 (458 aa).

The first 18 residues, 1–18 (MRVVVVVTGLVVVVVATA), serve as a signal peptide directing secretion. The disordered stretch occupies residues 24 to 47 (HDVKSASSPLSSSSVYQGSSGDDC). Residues 28–43 (SASSPLSSSSVYQGSS) are compositionally biased toward low complexity. C68 and C342 form a disulfide bridge. 2 N-linked (GlcNAc...) asparagine glycosylation sites follow: N106 and N141. The active-site Proton donor is E151. N-linked (GlcNAc...) asparagine glycosylation is found at N261, N337, and N359. The region spanning 363-434 (VMADCSTTLC…VRPSRCHKQQ (72 aa)) is the EGF-like domain. Cystine bridges form between C367–C378, C372–C411, and C413–C422.

This sequence belongs to the glycosyl hydrolase 56 family. Expressed by the venom duct.

It is found in the secreted. It carries out the reaction Random hydrolysis of (1-&gt;4)-linkages between N-acetyl-beta-D-glucosamine and D-glucuronate residues in hyaluronate.. Functionally, hyaluronidase catalyzes the hydrolysis of hyaluronic acid (HA), an anionic, nonsulfated glycosaminoglycan distributed widely throughout connective, epithelial, and neural tissues. In venom, they are known to enhance diffusion of the venom by degrading the extracellular matrix. The protein is Hyaluronidase conohyal-P1 of Conus purpurascens (Purple cone).